Consider the following 478-residue polypeptide: Cytochrome c-552 (478 aa).

The signal sequence occupies residues 1-26; the sequence is MARKTLRARRFFSLIFPFFFITSVYA. His-94 is a binding site for heme c. Heme contacts are provided by Cys-122, Cys-125, and Lys-126. Heme c is bound by residues Cys-160, Cys-163, His-164, Cys-209, Cys-212, and His-213. Residues Glu-215, Tyr-216, Lys-261, and Gln-263 each contribute to the Ca(2+) site. Residue Tyr-216 participates in substrate binding. His-264 serves as a coordination point for substrate. Heme c contacts are provided by His-275, Cys-282, Cys-285, His-286, His-301, Cys-314, Cys-317, His-318, and His-393.

Belongs to the cytochrome c-552 family. Ca(2+) is required as a cofactor. Requires heme c as cofactor.

The protein localises to the periplasm. The catalysed reaction is 6 Fe(III)-[cytochrome c] + NH4(+) + 2 H2O = 6 Fe(II)-[cytochrome c] + nitrite + 8 H(+). It participates in nitrogen metabolism; nitrate reduction (assimilation). Catalyzes the reduction of nitrite to ammonia, consuming six electrons in the process. This Salmonella typhi protein is Cytochrome c-552.